We begin with the raw amino-acid sequence, 387 residues long: Putative purine permease 15 (387 aa).

10 helical membrane passes run 44–64 (WVTI…ARLL), 84–104 (TLLQ…HFLI), 122–142 (LAIT…FSDV), 150–169 (VFTL…SKYY), 179–199 (FISL…FSAG), 210–230 (YGII…LCII), 252–272 (FVVV…ILVA), 306–326 (VAWQ…SAVF), 329–349 (VISV…YNTH), and 354–374 (VFRG…IYII).

It belongs to the purine permeases (TC 2.A.7.14) family.

Its subcellular location is the membrane. The chain is Putative purine permease 15 (PUP15) from Arabidopsis thaliana (Mouse-ear cress).